A 191-amino-acid polypeptide reads, in one-letter code: Recombination protein RecR (191 aa).

A C4-type zinc finger spans residues 51–66 (CQTCFHLSADPECEIC). Positions 74-168 (GVICVVADSR…SVSRIAYGLP (95 aa)) constitute a Toprim domain.

It belongs to the RecR family.

May play a role in DNA repair. It seems to be involved in an RecBC-independent recombinational process of DNA repair. It may act with RecF and RecO. The protein is Recombination protein RecR of Synechococcus sp. (strain CC9605).